A 318-amino-acid polypeptide reads, in one-letter code: L-malyl-CoA/beta-methylmalyl-CoA lyase (318 aa).

Residues F19, R24, K30, and R76 each contribute to the substrate site. Mg(2+) is bound by residues E141 and D168. Substrate-binding positions include A167–D168 and I251–H252.

This sequence belongs to the HpcH/HpaI aldolase family. As to quaternary structure, homohexamer. Dimer of trimers. Mg(2+) is required as a cofactor. The cofactor is Mn(2+).

It catalyses the reaction (S)-malyl-CoA = glyoxylate + acetyl-CoA. The catalysed reaction is (2R,3S)-beta-methylmalyl-CoA = propanoyl-CoA + glyoxylate. In terms of biological role, involved in the ethylmalonyl-CoA pathway for acetate assimilation. Catalyzes the reversible condensation of glyoxylate and acetyl-CoA to L-malyl-CoA and the reversible condensation of glyoxylate and propionyl-CoA to yield beta-methylmalyl-CoA. This Cereibacter sphaeroides (strain ATCC 17029 / ATH 2.4.9) (Rhodobacter sphaeroides) protein is L-malyl-CoA/beta-methylmalyl-CoA lyase.